The following is a 242-amino-acid chain: Zinc import ATP-binding protein ZnuC (242 aa).

An ABC transporter domain is found at 24–241 (INVENLSFFY…EKFLKMFSSY (218 aa)). 56–63 (GPNGGGKT) contacts ATP.

The protein belongs to the ABC transporter superfamily. Zinc importer (TC 3.A.1.15.5) family. As to quaternary structure, the complex is composed of two ATP-binding proteins (ZnuC), two transmembrane proteins (ZnuB) and a solute-binding protein (ZnuA).

Its subcellular location is the cell inner membrane. The enzyme catalyses Zn(2+)(out) + ATP(in) + H2O(in) = Zn(2+)(in) + ADP(in) + phosphate(in) + H(+)(in). Part of the ABC transporter complex ZnuABC involved in zinc import. Responsible for energy coupling to the transport system. The chain is Zinc import ATP-binding protein ZnuC from Ehrlichia chaffeensis (strain ATCC CRL-10679 / Arkansas).